The sequence spans 608 residues: Phosphomethylpyrimidine synthase (608 aa).

Substrate-binding positions include Asn-216, Met-245, Tyr-274, His-310, 330–332 (SRG), 371–374 (DGLR), and Glu-410. His-414 contributes to the Zn(2+) binding site. Tyr-437 contributes to the substrate binding site. His-478 is a Zn(2+) binding site. The [4Fe-4S] cluster site is built by Cys-558, Cys-561, and Cys-566.

This sequence belongs to the ThiC family. As to quaternary structure, homodimer. [4Fe-4S] cluster is required as a cofactor.

It catalyses the reaction 5-amino-1-(5-phospho-beta-D-ribosyl)imidazole + S-adenosyl-L-methionine = 4-amino-2-methyl-5-(phosphooxymethyl)pyrimidine + CO + 5'-deoxyadenosine + formate + L-methionine + 3 H(+). It participates in cofactor biosynthesis; thiamine diphosphate biosynthesis. Catalyzes the synthesis of the hydroxymethylpyrimidine phosphate (HMP-P) moiety of thiamine from aminoimidazole ribotide (AIR) in a radical S-adenosyl-L-methionine (SAM)-dependent reaction. This Ruegeria sp. (strain TM1040) (Silicibacter sp.) protein is Phosphomethylpyrimidine synthase.